The chain runs to 628 residues: Phosphomethylpyrimidine synthase (628 aa).

Residues N225, M254, Y283, H319, 339-341 (SRG), 380-383 (DGLR), and E419 contribute to the substrate site. A Zn(2+)-binding site is contributed by H423. Residue Y446 participates in substrate binding. A Zn(2+)-binding site is contributed by H487. The [4Fe-4S] cluster site is built by C567, C570, and C575.

This sequence belongs to the ThiC family. In terms of assembly, homodimer. [4Fe-4S] cluster serves as cofactor.

It catalyses the reaction 5-amino-1-(5-phospho-beta-D-ribosyl)imidazole + S-adenosyl-L-methionine = 4-amino-2-methyl-5-(phosphooxymethyl)pyrimidine + CO + 5'-deoxyadenosine + formate + L-methionine + 3 H(+). It participates in cofactor biosynthesis; thiamine diphosphate biosynthesis. In terms of biological role, catalyzes the synthesis of the hydroxymethylpyrimidine phosphate (HMP-P) moiety of thiamine from aminoimidazole ribotide (AIR) in a radical S-adenosyl-L-methionine (SAM)-dependent reaction. The chain is Phosphomethylpyrimidine synthase from Leptothrix cholodnii (strain ATCC 51168 / LMG 8142 / SP-6) (Leptothrix discophora (strain SP-6)).